The chain runs to 463 residues: Argininosuccinate lyase (463 aa).

It belongs to the lyase 1 family. Argininosuccinate lyase subfamily.

It localises to the cytoplasm. It catalyses the reaction 2-(N(omega)-L-arginino)succinate = fumarate + L-arginine. It participates in amino-acid biosynthesis; L-arginine biosynthesis; L-arginine from L-ornithine and carbamoyl phosphate: step 3/3. This Bradyrhizobium sp. (strain ORS 278) protein is Argininosuccinate lyase.